A 33-amino-acid polypeptide reads, in one-letter code: Dermonecrotic toxin LiSicTox-alphaI-1 (33 aa).

Mg(2+) is bound at residue E32.

Belongs to the arthropod phospholipase D family. Class II subfamily. It depends on Mg(2+) as a cofactor. Post-translationally, contains 2 disulfide bonds. As to expression, expressed by the venom gland.

The protein resides in the secreted. It carries out the reaction an N-(acyl)-sphingosylphosphocholine = an N-(acyl)-sphingosyl-1,3-cyclic phosphate + choline. It catalyses the reaction an N-(acyl)-sphingosylphosphoethanolamine = an N-(acyl)-sphingosyl-1,3-cyclic phosphate + ethanolamine. The enzyme catalyses a 1-acyl-sn-glycero-3-phosphocholine = a 1-acyl-sn-glycero-2,3-cyclic phosphate + choline. The catalysed reaction is a 1-acyl-sn-glycero-3-phosphoethanolamine = a 1-acyl-sn-glycero-2,3-cyclic phosphate + ethanolamine. Dermonecrotic toxins cleave the phosphodiester linkage between the phosphate and headgroup of certain phospholipids (sphingolipid and lysolipid substrates), forming an alcohol (often choline) and a cyclic phosphate. This toxin acts on sphingomyelin (SM). It may also act on ceramide phosphoethanolamine (CPE), lysophosphatidylcholine (LPC) and lysophosphatidylethanolamine (LPE), but not on lysophosphatidylserine (LPS), and lysophosphatidylglycerol (LPG). It acts by transphosphatidylation, releasing exclusively cyclic phosphate products as second products. In vivo, intradermal injection induces dermonecrosis. Induces hemolysis, increased vascular permeability, edema, inflammatory response, and platelet aggregation. In Loxosceles intermedia (Brown spider), this protein is Dermonecrotic toxin LiSicTox-alphaI-1.